Reading from the N-terminus, the 205-residue chain is Small ribosomal subunit protein uS4 (205 aa).

Residues 95 to 158 enclose the S4 RNA-binding domain; sequence SRLDNIVYRM…TKSPLVKNFI (64 aa).

The protein belongs to the universal ribosomal protein uS4 family. Part of the 30S ribosomal subunit. Contacts protein S5. The interaction surface between S4 and S5 is involved in control of translational fidelity.

Functionally, one of the primary rRNA binding proteins, it binds directly to 16S rRNA where it nucleates assembly of the body of the 30S subunit. In terms of biological role, with S5 and S12 plays an important role in translational accuracy. This Mycoplasma genitalium (strain ATCC 33530 / DSM 19775 / NCTC 10195 / G37) (Mycoplasmoides genitalium) protein is Small ribosomal subunit protein uS4.